A 415-amino-acid polypeptide reads, in one-letter code: Histidine--tRNA ligase (415 aa).

It belongs to the class-II aminoacyl-tRNA synthetase family. Homodimer.

The protein localises to the cytoplasm. It carries out the reaction tRNA(His) + L-histidine + ATP = L-histidyl-tRNA(His) + AMP + diphosphate + H(+). In Rickettsia akari (strain Hartford), this protein is Histidine--tRNA ligase.